Reading from the N-terminus, the 374-residue chain is Putative glutamate--cysteine ligase 2 (374 aa).

This sequence belongs to the glutamate--cysteine ligase type 2 family. YbdK subfamily.

The catalysed reaction is L-cysteine + L-glutamate + ATP = gamma-L-glutamyl-L-cysteine + ADP + phosphate + H(+). Functionally, ATP-dependent carboxylate-amine ligase which exhibits weak glutamate--cysteine ligase activity. This is Putative glutamate--cysteine ligase 2 from Acidovorax sp. (strain JS42).